A 21-amino-acid polypeptide reads, in one-letter code: M-lycotoxin-Ls4a (21 aa).

At Leu-21 the chain carries Leucine amide.

Expressed by the venom gland.

It is found in the secreted. In terms of biological role, may inhibit growth of bacteria. In Lycosa singoriensis (Wolf spider), this protein is M-lycotoxin-Ls4a.